The sequence spans 65 residues: Large ribosomal subunit protein uL30 (65 aa).

The protein belongs to the universal ribosomal protein uL30 family. Part of the 50S ribosomal subunit.

This is Large ribosomal subunit protein uL30 from Desulfosudis oleivorans (strain DSM 6200 / JCM 39069 / Hxd3) (Desulfococcus oleovorans).